Consider the following 901-residue polypeptide: Nuclear factor of activated T-cells, cytoplasmic 4 (901 aa).

Acidic residues predominate over residues 1-11; the sequence is MGAASCEDEEL. 2 disordered regions span residues 1–180 and 203–361; these read MGAA…SSWS and NEAA…TEDS. Residues 61-81 are compositionally biased toward pro residues; that stretch reads IPRPPPPRPGMHSPPPRPAPS. A compositionally biased stretch (gly residues) spans 96–109; sequence GGPGGTAGGTGGGR. Residues 114–119 are calcineurin-binding; that stretch reads PSIRIT. Positions 114–123 are enriched in low complexity; it reads PSIRITSISP. Residues 151 to 165 show a composition bias toward gly residues; that stretch reads GFGGYREAGGQGGGA. Positions 166-180 are enriched in low complexity; the sequence is FFSPSPGSSSLSSWS. A phosphoserine mark is found at S168, S170, S213, and S217. Residues 213 to 229 form an SP 1 repeat; sequence SPLPSPRASPRPWTPED. The tract at residues 213–293 is 2 approximate SP repeats; it reads SPLPSPRASP…LSRRGSLGEE (81 aa). Pro residues-rich tracts occupy residues 215–227 and 254–263; these read LPSP…PWTP and GPIPASPRPA. Positions 268–270 match the Nuclear localization signal motif; it reads KRR. A compositionally biased stretch (low complexity) spans 272 to 288; the sequence is SSSGTPSSASPALSRRG. The SP 2; approximate repeat unit spans residues 277–293; sequence PSSASPALSRRGSLGEE. Phosphoserine is present on residues S289, S334, and S344. The RHD domain occupies 401–582; the sequence is SALPPLDWPL…VPIECSQRSA (182 aa). The DNA-binding element occupies 430-437; the sequence is RAHYETEG. The region spanning 586-683 is the IPT/TIG domain; it reads PQVEAYSPSA…KRSPTQSFKF (98 aa). The Nuclear localization signal motif lies at 672–674; sequence RRK. A Glycyl lysine isopeptide (Lys-Gly) (interchain with G-Cter in SUMO2) cross-link involves residue K689. 2 disordered regions span residues 697-721 and 791-868; these read SLRG…PRPP and QYGG…GFRD. A compositionally biased stretch (pro residues) spans 805–822; that stretch reads FSPPAPFRPPLPSSPPLE.

Member of the multicomponent NFATC transcription complex that consists of at least two components, a pre-existing cytoplasmic component NFATC2 and an inducible nuclear component NFATC1. Other NFAT proteins, such as NFATC4, NFATC3, or members of the activating protein-1 (AP-1) family and MAF can also bind the complex. NFAT proteins can bind DNA as monomers or dimers. Component of a promoter-binding complex composed of STAT3, NFATC3 and NFATC4; complex formation is enhanced by calcineurin. Interacts with CREBBP; this interaction potentiates transcription activation. Interacts with MAPK8/JNK1 and MAPK9/JNK2. Interacts with GATA4 (via the second Zn finger). Interacts (via N-terminus) with IRAK1 (via C-terminus). Interacts with RPS6KA3. Interacts with HOMER1, HOMER2 and HOMER3; this interaction competes with calcineurin/PPP3CA-binding and hence prevents NFATC4 dephosphorylation and activation. Interacts with ESR1 and ESR2; this interaction decreases NFATC4 transcriptional activity. Interacts with MTOR and MAPK7/ERK5. Interacts with TRIM17; this interaction prevents NFATC3 nuclear localization. Interacts with TCF25 (via C-terminus); the interaction leads to suppression of NFATC4 transcription factor activity and is reduced following stimulation with angiotensin-2. Phosphorylated by NFATC-kinases; dephosphorylated by calcineurin/PPP3CA. Phosphorylated on Ser-168 and Ser-170 by MTOR, IRAK1, MAPK7/ERK5 and MAPK14/p38, on Ser-213 and Ser-217 by MAPK8 and MAPK9, and on Ser-289 and Ser-344 by RPS6KA3. Phosphorylated by GSK3B; this phosphorylation markedly increases NFATC4 ubiquitination. Phosphorylation by MAPK8/JNK1, MAPK9/JNK2 and RPS6KA3 may stimulate NFATC4 transcriptional activity. Phosphorylation at Ser-168 and Ser-170 is stimulated by UV irradiation. In terms of processing, ubiquitinated, leading to degradation by the proteasome. Ubiquitination may be stimulated by GSK3B-dependent phosphorylation. Polyubiquitin linkage mainly occurs through 'Lys-48'. As to expression, expressed in heart (at protein level).

It is found in the cytoplasm. Its subcellular location is the nucleus. Functionally, ca(2+)-regulated transcription factor that is involved in several processes, including the development and function of the immune, cardiovascular, musculoskeletal, and nervous systems. Involved in T-cell activation, stimulating the transcription of cytokine genes, including that of IL2 and IL4. Along with NFATC3, involved in embryonic heart development. Following JAK/STAT signaling activation and as part of a complex with NFATC3 and STAT3, binds to the alpha-beta E4 promoter region of CRYAB and activates transcription in cardiomyocytes. Involved in mitochondrial energy metabolism required for cardiac morphogenesis and function. Transactivates many genes involved in heart physiology. Along with GATA4, binds to and activates NPPB/BNP promoter. Activates NPPA/ANP/ANF and MYH7/beta-MHC transcription. Binds to and transactivates AGTR2 gene promoter. Involved in the regulation of adult hippocampal neurogenesis. Involved in BDNF-driven pro-survival signaling in hippocampal adult-born neurons. Involved in the formation of long-term spatial memory and long-term potentiation. In cochlear nucleus neurons, may play a role in deafferentation-induced apoptosis during a developmental critical period when auditory neurons depend on afferent input for survival. Binds to and activates the BACE1/Beta-secretase 1 promoter, hence may regulate the proteolytic processing of the amyloid precursor protein (APP). Plays a role in adipocyte differentiation. May be involved in myoblast differentiation into myotubes. Binds the consensus DNA sequence 5'-GGAAAAT-3'. In the presence of CREBBP, activates TNF transcription. Binds to PPARG gene promoter and regulates its activity. Binds to PPARG and REG3G gene promoters. The sequence is that of Nuclear factor of activated T-cells, cytoplasmic 4 (Nfatc4) from Rattus norvegicus (Rat).